Reading from the N-terminus, the 234-residue chain is Leucyl/phenylalanyl-tRNA--protein transferase (234 aa).

This sequence belongs to the L/F-transferase family.

It localises to the cytoplasm. It catalyses the reaction N-terminal L-lysyl-[protein] + L-leucyl-tRNA(Leu) = N-terminal L-leucyl-L-lysyl-[protein] + tRNA(Leu) + H(+). The catalysed reaction is N-terminal L-arginyl-[protein] + L-leucyl-tRNA(Leu) = N-terminal L-leucyl-L-arginyl-[protein] + tRNA(Leu) + H(+). The enzyme catalyses L-phenylalanyl-tRNA(Phe) + an N-terminal L-alpha-aminoacyl-[protein] = an N-terminal L-phenylalanyl-L-alpha-aminoacyl-[protein] + tRNA(Phe). Functionally, functions in the N-end rule pathway of protein degradation where it conjugates Leu, Phe and, less efficiently, Met from aminoacyl-tRNAs to the N-termini of proteins containing an N-terminal arginine or lysine. The sequence is that of Leucyl/phenylalanyl-tRNA--protein transferase from Shigella flexneri serotype 5b (strain 8401).